Consider the following 365-residue polypeptide: Uroporphyrinogen decarboxylase (365 aa).

Substrate is bound by residues 27–31 (RQAGR), aspartate 77, tyrosine 154, threonine 209, and histidine 327.

It belongs to the uroporphyrinogen decarboxylase family. As to quaternary structure, homodimer.

Its subcellular location is the cytoplasm. The catalysed reaction is uroporphyrinogen III + 4 H(+) = coproporphyrinogen III + 4 CO2. It functions in the pathway porphyrin-containing compound metabolism; protoporphyrin-IX biosynthesis; coproporphyrinogen-III from 5-aminolevulinate: step 4/4. In terms of biological role, catalyzes the decarboxylation of four acetate groups of uroporphyrinogen-III to yield coproporphyrinogen-III. The polypeptide is Uroporphyrinogen decarboxylase (Nitrosospira multiformis (strain ATCC 25196 / NCIMB 11849 / C 71)).